The chain runs to 178 residues: MSVDKAFRDMIRNEIEVQLKPLRDVVARLEEGTADLDALRNVAERLAPLAEVVGPLFGAQIPAAAKAGRRGPGRPPAARSAVTAAPAAVGGKRRGRKPAAAGADGSRACAIIGCGKPSRTKGYCAAHYQKLRMLEKTNRRPSDWKDYADPDSVDDIKLPRGRAASKALAAAAQAGHAG.

2 disordered regions span residues 67–102 (AGRR…AAAG) and 138–158 (NRRP…DIKL). Residues 76–90 (PAARSAVTAAPAAVG) are compositionally biased toward low complexity.

In Myxococcus xanthus, this protein is Vegetative protein (vegA).